The primary structure comprises 49 residues: Large ribosomal subunit protein bL33 (49 aa).

This sequence belongs to the bacterial ribosomal protein bL33 family.

The sequence is that of Large ribosomal subunit protein bL33 from Syntrophotalea carbinolica (strain DSM 2380 / NBRC 103641 / GraBd1) (Pelobacter carbinolicus).